A 118-amino-acid chain; its full sequence is UPF0295 protein BCE33L0445 (118 aa).

2 helical membrane-spanning segments follow: residues 12 to 32 (IRTF…LGVF) and 43 to 63 (FMMV…WIGM).

Belongs to the UPF0295 family.

It is found in the cell membrane. The chain is UPF0295 protein BCE33L0445 from Bacillus cereus (strain ZK / E33L).